Reading from the N-terminus, the 233-residue chain is Ribose-5-phosphate isomerase A (233 aa).

Residues 28–31 (SGST), 83–86 (DGAD), and 96–99 (KGGG) each bind substrate. Glu-105 serves as the catalytic Proton acceptor. Lys-123 is a binding site for substrate.

This sequence belongs to the ribose 5-phosphate isomerase family. Homodimer.

It catalyses the reaction aldehydo-D-ribose 5-phosphate = D-ribulose 5-phosphate. Its pathway is carbohydrate degradation; pentose phosphate pathway; D-ribose 5-phosphate from D-ribulose 5-phosphate (non-oxidative stage): step 1/1. Functionally, catalyzes the reversible conversion of ribose-5-phosphate to ribulose 5-phosphate. The sequence is that of Ribose-5-phosphate isomerase A from Maricaulis maris (strain MCS10) (Caulobacter maris).